The chain runs to 360 residues: Epoxyqueuosine reductase (360 aa).

The active-site Proton donor is Asp142. Residues 187–216 (APTEPVTAHCGSCQACMDVCPTQAIVAPHR) form the 4Fe-4S ferredoxin-type domain. 8 residues coordinate [4Fe-4S] cluster: Cys196, Cys199, Cys202, Cys206, Cys222, Cys249, Cys252, and Cys256.

It belongs to the QueG family. As to quaternary structure, monomer. Cob(II)alamin is required as a cofactor. Requires [4Fe-4S] cluster as cofactor.

It localises to the cytoplasm. The enzyme catalyses epoxyqueuosine(34) in tRNA + AH2 = queuosine(34) in tRNA + A + H2O. Its pathway is tRNA modification; tRNA-queuosine biosynthesis. In terms of biological role, catalyzes the conversion of epoxyqueuosine (oQ) to queuosine (Q), which is a hypermodified base found in the wobble positions of tRNA(Asp), tRNA(Asn), tRNA(His) and tRNA(Tyr). The chain is Epoxyqueuosine reductase from Alicycliphilus denitrificans (strain DSM 14773 / CIP 107495 / K601).